The sequence spans 347 residues: D-alanine--D-alanine ligase (347 aa).

The ATP-grasp domain occupies 134-332 (KLYAKDLGVK…LAQSLPKTPK (199 aa)). ATP is bound at residue 161 to 216 (LIGFNFPFIVKPSNAGSSLGVNVVKEEKELIYALDSAFEYSKEVLIEPFIQGVKEY). 3 residues coordinate Mg(2+): D288, E300, and N302.

This sequence belongs to the D-alanine--D-alanine ligase family. Mg(2+) is required as a cofactor. It depends on Mn(2+) as a cofactor.

It localises to the cytoplasm. The catalysed reaction is 2 D-alanine + ATP = D-alanyl-D-alanine + ADP + phosphate + H(+). It functions in the pathway cell wall biogenesis; peptidoglycan biosynthesis. In terms of biological role, cell wall formation. The polypeptide is D-alanine--D-alanine ligase (Helicobacter pylori (strain J99 / ATCC 700824) (Campylobacter pylori J99)).